Here is a 48-residue protein sequence, read N- to C-terminus: DNA-directed RNA polymerase subunit Rpo12 (48 aa).

Positions 6, 9, 26, and 29 each coordinate Zn(2+).

This sequence belongs to the archaeal Rpo12/eukaryotic RPC10 RNA polymerase subunit family. Part of the 13-subunit RNA polymerase. The cofactor is Zn(2+).

Its subcellular location is the cytoplasm. It catalyses the reaction RNA(n) + a ribonucleoside 5'-triphosphate = RNA(n+1) + diphosphate. Its function is as follows. DNA-dependent RNA polymerase (RNAP) catalyzes the transcription of DNA into RNA using the four ribonucleoside triphosphates as substrates. This Sulfolobus acidocaldarius (strain ATCC 33909 / DSM 639 / JCM 8929 / NBRC 15157 / NCIMB 11770) protein is DNA-directed RNA polymerase subunit Rpo12.